An 828-amino-acid chain; its full sequence is Outer membrane usher protein MrkC (828 aa).

Residues 1 to 18 (MKQRSICPGRLSTAIAVA) form the signal peptide. An intrachain disulfide couples C813 to C827.

This sequence belongs to the fimbrial export usher family.

Its subcellular location is the cell outer membrane. Its function is as follows. Involved in the export and assembly of the type 3 fimbrial subunit (MrkA). The protein is Outer membrane usher protein MrkC (mrkC) of Klebsiella pneumoniae.